We begin with the raw amino-acid sequence, 142 residues long: Augurin-A (142 aa).

The first 28 residues, 1 to 28 (MLSEKFHLRLLTLLTLLTALSLTDVASE), serve as a signal peptide directing secretion. Propeptides lie at residues 29–66 (SKLE…LKRP) and 127–142 (GAAS…YDYY).

It belongs to the augurin family.

It is found in the secreted. The protein localises to the cytoplasm. The protein resides in the apical cell membrane. Its function is as follows. Probable hormone. Required for the proper formation of the central nervous system by attenuating cell proliferation during development. In Danio rerio (Zebrafish), this protein is Augurin-A.